Reading from the N-terminus, the 337-residue chain is Glycerol-3-phosphate dehydrogenase [NAD(P)+] (337 aa).

NADPH-binding residues include serine 12, tryptophan 13, and lysine 110. The sn-glycerol 3-phosphate site is built by lysine 110, glycine 141, and serine 143. Alanine 145 is a binding site for NADPH. Sn-glycerol 3-phosphate contacts are provided by lysine 196, aspartate 249, serine 259, arginine 260, and asparagine 261. The active-site Proton acceptor is lysine 196. Residue arginine 260 participates in NADPH binding. NADPH-binding residues include valine 284 and glutamate 286.

The protein belongs to the NAD-dependent glycerol-3-phosphate dehydrogenase family.

It is found in the cytoplasm. The enzyme catalyses sn-glycerol 3-phosphate + NAD(+) = dihydroxyacetone phosphate + NADH + H(+). It catalyses the reaction sn-glycerol 3-phosphate + NADP(+) = dihydroxyacetone phosphate + NADPH + H(+). The protein operates within membrane lipid metabolism; glycerophospholipid metabolism. In terms of biological role, catalyzes the reduction of the glycolytic intermediate dihydroxyacetone phosphate (DHAP) to sn-glycerol 3-phosphate (G3P), the key precursor for phospholipid synthesis. This Levilactobacillus brevis (strain ATCC 367 / BCRC 12310 / CIP 105137 / JCM 1170 / LMG 11437 / NCIMB 947 / NCTC 947) (Lactobacillus brevis) protein is Glycerol-3-phosphate dehydrogenase [NAD(P)+].